The following is an 84-amino-acid chain: Beta-cardiotoxin CTX23 (84 aa).

The N-terminal stretch at 1 to 21 (MKTLLLTLVVVTIVCLDLGYT) is a signal peptide. 4 cysteine pairs are disulfide-bonded: Cys24–Cys43, Cys36–Cys61, Cys65–Cys76, and Cys77–Cys82.

It belongs to the three-finger toxin family. Short-chain subfamily. Aminergic toxin sub-subfamily. As to expression, expressed by the venom gland.

Its subcellular location is the secreted. In terms of biological role, acts as a beta-blocker by binding to beta-1 and beta-2 adrenergic receptors (ADRB1 and ADRB2). It dose-dependently decreases the heart rate (bradycardia), whereas conventional cardiotoxins increases it. At 100 mg/kg, intraperitoneal injection into mice provokes labored breathing, impaired locomotion, lack of response to external stimuli, and death (after 30 minutes). In Ophiophagus hannah (King cobra), this protein is Beta-cardiotoxin CTX23.